We begin with the raw amino-acid sequence, 296 residues long: Nucleotide-binding protein Rmet_0297 (296 aa).

8–15 (GISGSGKS) is a binding site for ATP. Position 57–60 (57–60 (DIRS)) interacts with GTP.

The protein belongs to the RapZ-like family.

In terms of biological role, displays ATPase and GTPase activities. The polypeptide is Nucleotide-binding protein Rmet_0297 (Cupriavidus metallidurans (strain ATCC 43123 / DSM 2839 / NBRC 102507 / CH34) (Ralstonia metallidurans)).